The chain runs to 344 residues: Acireductone dioxygenase (344 aa).

Residues histidine 92, histidine 94, glutamate 98, and histidine 137 each contribute to the Fe(2+) site. Residues histidine 92, histidine 94, glutamate 98, and histidine 137 each coordinate Ni(2+).

This sequence belongs to the acireductone dioxygenase (ARD) family. The cofactor is Fe(2+). Requires Ni(2+) as cofactor.

The protein resides in the cytoplasm. It is found in the nucleus. The enzyme catalyses 1,2-dihydroxy-5-(methylsulfanyl)pent-1-en-3-one + O2 = 4-methylsulfanyl-2-oxobutanoate + formate + 2 H(+). It catalyses the reaction 1,2-dihydroxy-5-(methylsulfanyl)pent-1-en-3-one + O2 = 3-(methylsulfanyl)propanoate + CO + formate + 2 H(+). Its pathway is amino-acid biosynthesis; L-methionine biosynthesis via salvage pathway; L-methionine from S-methyl-5-thio-alpha-D-ribose 1-phosphate: step 5/6. Functionally, catalyzes 2 different reactions between oxygen and the acireductone 1,2-dihydroxy-3-keto-5-methylthiopentene (DHK-MTPene) depending upon the metal bound in the active site. Fe-containing acireductone dioxygenase (Fe-ARD) produces formate and 2-keto-4-methylthiobutyrate (KMTB), the alpha-ketoacid precursor of methionine in the methionine recycle pathway. Ni-containing acireductone dioxygenase (Ni-ARD) produces methylthiopropionate, carbon monoxide and formate, and does not lie on the methionine recycle pathway. This is Acireductone dioxygenase from Leishmania braziliensis.